Reading from the N-terminus, the 543-residue chain is UPF0324 membrane protein RB9488 (543 aa).

Over residues Met1–Asp22 the composition is skewed to low complexity. Positions Met1 to Leu41 are disordered. A helical transmembrane segment spans residues Trp51 to Pro73. A disordered region spans residues Val91 to Ala120. Transmembrane regions (helical) follow at residues Ile160–Asn182, Ala189–Gly211, Glu221–Leu243, Leu270–Tyr292, Asn307–Cys329, Leu336–Ile358, Gly368–Gly390, Ile403–Phe422, Ile437–Tyr459, Thr479–Thr496, and Leu511–Phe533.

This sequence belongs to the UPF0324 family.

It localises to the cell membrane. This Rhodopirellula baltica (strain DSM 10527 / NCIMB 13988 / SH1) protein is UPF0324 membrane protein RB9488.